Here is a 368-residue protein sequence, read N- to C-terminus: MSLYPIYNFSAGPAVLPEAVLETARQEMLDYNGTGFPVMAMSHRSEMFLSILHHAEQDLRQLLKVPDNYKILFLQGGATTQFNMAAMNLAHGFRTADAVVTGNWSRIAYEQMSRLTDTEIRLAAHGGEQFDYLDLPPVETWDVAPDSAFVHFAVNETVNGLQYREVPRLSEGMPPLVCDMSSEILSREFDVADYGLIYAGAQKNIGPAGVTVVIVREDLLERCPNDIPDVFNYRSHINRDGMYNTPSTYAIYMSGLVFRWLQAQGGVKKIEAVNRLKAQTLYETIDGSGGFYINRIRPNARSKMNVVFQTRDEELDRRFVLEAELQGLCLLKGYKSVGGMRASIYNAMPLEGVRALADFMRDFQRRYG.

Arg44 is an L-glutamate binding site. Residues 78–79 (AT), Trp104, Thr157, Asp179, and Gln202 contribute to the pyridoxal 5'-phosphate site. Lys203 bears the N6-(pyridoxal phosphate)lysine mark. A pyridoxal 5'-phosphate-binding site is contributed by 244–245 (NT).

The protein belongs to the class-V pyridoxal-phosphate-dependent aminotransferase family. SerC subfamily. In terms of assembly, homodimer. The cofactor is pyridoxal 5'-phosphate.

The protein localises to the cytoplasm. The enzyme catalyses O-phospho-L-serine + 2-oxoglutarate = 3-phosphooxypyruvate + L-glutamate. It catalyses the reaction 4-(phosphooxy)-L-threonine + 2-oxoglutarate = (R)-3-hydroxy-2-oxo-4-phosphooxybutanoate + L-glutamate. It functions in the pathway amino-acid biosynthesis; L-serine biosynthesis; L-serine from 3-phospho-D-glycerate: step 2/3. It participates in cofactor biosynthesis; pyridoxine 5'-phosphate biosynthesis; pyridoxine 5'-phosphate from D-erythrose 4-phosphate: step 3/5. Catalyzes the reversible conversion of 3-phosphohydroxypyruvate to phosphoserine and of 3-hydroxy-2-oxo-4-phosphonooxybutanoate to phosphohydroxythreonine. This is Phosphoserine aminotransferase from Neisseria meningitidis serogroup C / serotype 2a (strain ATCC 700532 / DSM 15464 / FAM18).